The primary structure comprises 604 residues: UvrABC system protein C (604 aa).

One can recognise a GIY-YIG domain in the interval Glu-10 to Ile-89. In terms of domain architecture, UVR spans Ser-199–Leu-234.

Belongs to the UvrC family. In terms of assembly, interacts with UvrB in an incision complex.

The protein resides in the cytoplasm. The UvrABC repair system catalyzes the recognition and processing of DNA lesions. UvrC both incises the 5' and 3' sides of the lesion. The N-terminal half is responsible for the 3' incision and the C-terminal half is responsible for the 5' incision. The polypeptide is UvrABC system protein C (Methanococcoides burtonii (strain DSM 6242 / NBRC 107633 / OCM 468 / ACE-M)).